We begin with the raw amino-acid sequence, 339 residues long: Tetraacyldisaccharide 4'-kinase (339 aa).

Residue 58–65 (TVGGSGKT) coordinates ATP.

Belongs to the LpxK family.

The catalysed reaction is a lipid A disaccharide + ATP = a lipid IVA + ADP + H(+). Its pathway is glycolipid biosynthesis; lipid IV(A) biosynthesis; lipid IV(A) from (3R)-3-hydroxytetradecanoyl-[acyl-carrier-protein] and UDP-N-acetyl-alpha-D-glucosamine: step 6/6. Functionally, transfers the gamma-phosphate of ATP to the 4'-position of a tetraacyldisaccharide 1-phosphate intermediate (termed DS-1-P) to form tetraacyldisaccharide 1,4'-bis-phosphate (lipid IVA). The chain is Tetraacyldisaccharide 4'-kinase from Shewanella baltica (strain OS155 / ATCC BAA-1091).